The chain runs to 517 residues: B3 domain-containing protein REM1 (517 aa).

The TF-B3 1 DNA-binding region spans 7–92 (FSLFQQKFRT…VFHVAVVSPS (86 aa)). Residues 115–140 (DDVDDDDYGQDDEDDDDDDDEGEDNI) are compositionally biased toward acidic residues. Residues 115–158 (DDVDDDDYGQDDEDDDDDDDEGEDNIENISEKTDKRQEADSSSD) are disordered. Residues 143 to 157 (ISEKTDKRQEADSSS) show a composition bias toward basic and acidic residues. 2 consecutive DNA-binding regions (TF-B3) follow at residues 162–259 (FITA…CPQE) and 285–385 (FLIV…FCSK). The disordered stretch occupies residues 393-415 (GKGNQRTRKKRACETAPQPRNVK).

As to expression, expressed in the shoot apical meristem (SAM), in the inflorescence apex and flowers.

The protein resides in the nucleus. Functionally, may play a role in flower development. In Arabidopsis thaliana (Mouse-ear cress), this protein is B3 domain-containing protein REM1 (REM1).